A 257-amino-acid chain; its full sequence is MSFFLTTPTAIDLGVNIDHVATLRNARGTAYPDPVRAALAAEDAGADAITLHLREDRRHIVDADVRALRPRVKTRMNLECAVTPEMLDIACEIRPHDACLVPEKRSELTTEGGLDVVGHFDAVRAACKQLADAGVRVSLFIDPDEAQIRAAHETGAPVIELHTGRYADAHDAAEQQREFERIATGVDAGIALGLKVNAGHGLHYTNVQAIAALPGIAELNIGHAIVAHAVFVGWDNAVREMKAIMVAARVAALHGGR.

Asn16 serves as a coordination point for 3-amino-2-oxopropyl phosphate. 18 to 19 (DH) contacts 1-deoxy-D-xylulose 5-phosphate. Arg27 lines the 3-amino-2-oxopropyl phosphate pocket. His52 acts as the Proton acceptor in catalysis. Arg54 and His59 together coordinate 1-deoxy-D-xylulose 5-phosphate. Glu79 (proton acceptor) is an active-site residue. Thr109 serves as a coordination point for 1-deoxy-D-xylulose 5-phosphate. The active-site Proton donor is the His200. 3-amino-2-oxopropyl phosphate contacts are provided by residues Gly201 and 222 to 223 (GH).

It belongs to the PNP synthase family. In terms of assembly, homooctamer; tetramer of dimers.

It localises to the cytoplasm. It carries out the reaction 3-amino-2-oxopropyl phosphate + 1-deoxy-D-xylulose 5-phosphate = pyridoxine 5'-phosphate + phosphate + 2 H2O + H(+). Its pathway is cofactor biosynthesis; pyridoxine 5'-phosphate biosynthesis; pyridoxine 5'-phosphate from D-erythrose 4-phosphate: step 5/5. In terms of biological role, catalyzes the complicated ring closure reaction between the two acyclic compounds 1-deoxy-D-xylulose-5-phosphate (DXP) and 3-amino-2-oxopropyl phosphate (1-amino-acetone-3-phosphate or AAP) to form pyridoxine 5'-phosphate (PNP) and inorganic phosphate. This Burkholderia pseudomallei (strain K96243) protein is Pyridoxine 5'-phosphate synthase.